Here is a 146-residue protein sequence, read N- to C-terminus: Large ribosomal subunit protein uL11 (146 aa).

Belongs to the universal ribosomal protein uL11 family. As to quaternary structure, part of the ribosomal stalk of the 50S ribosomal subunit. Interacts with L10 and the large rRNA to form the base of the stalk. L10 forms an elongated spine to which L12 dimers bind in a sequential fashion forming a multimeric L10(L12)X complex. In terms of processing, one or more lysine residues are methylated.

Functionally, forms part of the ribosomal stalk which helps the ribosome interact with GTP-bound translation factors. The polypeptide is Large ribosomal subunit protein uL11 (Corynebacterium kroppenstedtii (strain DSM 44385 / JCM 11950 / CIP 105744 / CCUG 35717)).